Consider the following 402-residue polypeptide: MTKLVPPHGSDTLKSLALEGNALTVELERAKLLPKINCSSREEGDIIMMGVGGFTPLEGFMGKADWQSVCDNMTIESGLFWPIPITLSTDNEGVNQGDEVALVNGETDEIIATMVISEKYSIDKTHECNTVYKTTEIEHPGVVMVMAQGKYNLAGSIKVLSDGGFPEKYSSLYMTPMETRAYFDDKGWKTVAAFQTRNPMHRSHEYLVKIAVEVCDGVMIHSVLGNLKAGDIPANVRSEAISVLIENYFVDNTILQSGYPLDMRYAGPREALLHALFRQNYGCSHLIVGRDHAGIDDYYGPFDAHNIFDEIADDALMTKALKIDWTFWCHKCGGMSSMKTCPHSAEDRALLSGTKVRKMLSDSEDLPETFSRPEVAKVLQAYYAGIKDEDKVEIKLNGHSAK.

It belongs to the sulfate adenylyltransferase family.

It catalyses the reaction sulfate + ATP + H(+) = adenosine 5'-phosphosulfate + diphosphate. It functions in the pathway sulfur metabolism; hydrogen sulfide biosynthesis; sulfite from sulfate: step 1/3. This is Sulfate adenylyltransferase from Ruthia magnifica subsp. Calyptogena magnifica.